The primary structure comprises 315 residues: Tyrosine recombinase XerC (315 aa).

The Core-binding (CB) domain maps to 1–103 (MITSFYAFLD…AIKSFARFCV (103 aa)). The 183-residue stretch at 124–306 (ELPSPLTYEQ…SMKLKKQIHD (183 aa)) folds into the Tyr recombinase domain. Residues arginine 164, lysine 188, histidine 258, arginine 261, and histidine 284 contribute to the active site. Tyrosine 293 (O-(3'-phospho-DNA)-tyrosine intermediate) is an active-site residue.

It belongs to the 'phage' integrase family. XerC subfamily. As to quaternary structure, forms a cyclic heterotetrameric complex composed of two molecules of XerC and two molecules of XerD.

It localises to the cytoplasm. Functionally, site-specific tyrosine recombinase, which acts by catalyzing the cutting and rejoining of the recombining DNA molecules. The XerC-XerD complex is essential to convert dimers of the bacterial chromosome into monomers to permit their segregation at cell division. It also contributes to the segregational stability of plasmids. This is Tyrosine recombinase XerC from Chlamydia trachomatis serovar L2b (strain UCH-1/proctitis).